The sequence spans 588 residues: Complement component C8 beta chain (588 aa).

An N-terminal signal peptide occupies residues 1–30 (MFRVAIPRSALNLHSCLLHVTLSLVLISKA). A propeptide spanning residues 31–46 (AITTAGNEDSDVREAR) is cleaved from the precursor. In terms of domain architecture, TSP type-1 1 spans 58–113 (DCVISDWSAWSRCDTCQKKRYRYAKLDQPSQFGGEPCHFHDMEDEACDVPDRYTCD). 7 disulfide bridges follow: C59/C94, C70/C104, C73/C112, C118/C129, C123/C142, C136/C151, and C158/C196. W64 and W67 each carry a C-linked (Man) tryptophan glycan. Residues 115-152 (IPLCEGFLCTQTGRCIHRTLQCNGEDDCGDMSDEVGCK) enclose the LDL-receptor class A domain. Residues L134, N137, E139, D141, D147, and E148 each contribute to the Ca(2+) site. One can recognise an MACPF domain in the interval 154–500 (VPKPCRQEAE…EYLAESSSCR (347 aa)). 4 consecutive transmembrane segments (beta stranded) span residues 248-255 (TIVSIGFA), 258-265 (GIAEFGFN), 375-382 (TQAGLKIG), and 388-395 (VYVSAGIE). Cystine bridges form between C374–C399, C499–C547, C501–C517, C504–C519, and C521–C530. Residues 501–531 (CAPCHNNGVAVLRGTRCDCVCPTGYTGRGCE) enclose the EGF-like domain. In terms of domain architecture, TSP type-1 2 spans 542 to 588 (DGSWSCWGAWSSCSGRKMSRSRQCNNPVPSDGGLACRGLQQESTDCF). W548 and W551 each carry a C-linked (Man) tryptophan glycan. C554 and C587 are joined by a disulfide.

The protein belongs to the complement C6/C7/C8/C9 family. Heterotrimer of 3 chains: alpha (C8A), beta (C8B) and gamma (C8G); the alpha and gamma chains are disulfide bonded. Component of the membrane attack complex (MAC), composed of complement C5b, C6, C7, C8A, C8B, C8G and multiple copies of the pore-forming subunit C9.

It is found in the secreted. Its subcellular location is the target cell membrane. In terms of biological role, component of the membrane attack complex (MAC), a multiprotein complex activated by the complement cascade, which inserts into a target cell membrane and forms a pore, leading to target cell membrane rupture and cell lysis. The MAC is initiated by proteolytic cleavage of C5 into complement C5b in response to the classical, alternative, lectin and GZMK complement pathways. The complement pathways consist in a cascade of proteins that leads to phagocytosis and breakdown of pathogens and signaling that strengthens the adaptive immune system. C8B, together with C8A and C8G, inserts into the target membrane, but does not form pores by itself. During MAC assembly, associates with C5b, C6 and C7 to form the C5b8 intermediate complex that inserts into the target membrane and traverses the bilayer increasing membrane rigidity. The chain is Complement component C8 beta chain (c8b) from Paralichthys olivaceus (Bastard halibut).